We begin with the raw amino-acid sequence, 258 residues long: SMH class II histocompatibility antigen, beta-1 chain (258 aa).

The signal sequence occupies residues 1 to 29; sequence MMVLPVPVAPWTAALTVLLMVLNKSVVQG. Positions 30 to 121 are beta-1; the sequence is RTTPENYLFR…LNQRLSQSLI (92 aa). The Extracellular portion of the chain corresponds to 30–225; that stretch reads RTTPENYLFR…RAQSDSARNK (196 aa). 2 disulfides stabilise this stretch: cysteine 44/cysteine 106 and cysteine 144/cysteine 200. The segment at 122-215 is beta-2; it reads AQPKVHVSPS…SLDRPITVEW (94 aa). The Ig-like C1-type domain maps to 124–212; that stretch reads PKVHVSPSKG…EHPSLDRPIT (89 aa). The interval 216–225 is connecting peptide; it reads RAQSDSARNK. The N-linked (GlcNAc...) asparagine glycan is linked to asparagine 224. The chain crosses the membrane as a helical span at residues 226–246; it reads TLTGVGGLVLGLIFLAVGLIM. Over 247-258 the chain is Cytoplasmic; sequence HVRSKKAQRGSR.

The protein belongs to the MHC class II family.

It is found in the membrane. The chain is SMH class II histocompatibility antigen, beta-1 chain from Spalax ehrenbergi (Middle East blind mole rat).